A 230-amino-acid polypeptide reads, in one-letter code: Claudin-2 (230 aa).

The Cytoplasmic segment spans residues 1–7 (MASLGLQ). Residues 8 to 28 (LVGYILGLLGLLGTLVAMLLP) traverse the membrane as a helical segment. At 29–81 (SWRTSSYVGTSIVTAVGFSKGLWMECATHSTGITQCDIYSTLLGLPADIQAAQ) the chain is on the extracellular side. Residues Cys54 and Cys64 are joined by a disulfide bond. A helical membrane pass occupies residues 82–102 (AMMVTSSAISSLACIVSVVGM). The Cytoplasmic segment spans residues 103 to 116 (RCTVFCQDSRAKDR). The chain crosses the membrane as a helical span at residues 117–137 (LAVVGGVFFIIGGLLGFIPVA). Over 138–162 (WNLHGILRDFYSPLVPDSMKFEIGE) the chain is Extracellular. A helical transmembrane segment spans residues 163–183 (ALYLGIISSLFSLVAGIILCF). Over 184–230 (SCPLQGNRSDYYDSYQAQPLATRGSPRPGQPPKAKSEFNSYSLTGYV) the chain is Cytoplasmic. The disordered stretch occupies residues 205–230 (TRGSPRPGQPPKAKSEFNSYSLTGYV). Lys218 is covalently cross-linked (Glycyl lysine isopeptide (Lys-Gly) (interchain with G-Cter in SUMO)). Phosphoserine is present on residues Ser219 and Ser223. Over residues 220-230 (EFNSYSLTGYV) the composition is skewed to polar residues. Residues 229–230 (YV) are interaction with TJP1, TJP2 and TJP3.

The protein belongs to the claudin family. As to quaternary structure, can form homo- and heteropolymers with other claudins to mediate paracellular barrier and channel functions of tight junctions in response to physiological stimuli. Homopolymers interact with CLDN3, but not CLDN1, homopolymers. Directly interacts with TJP1/ZO-1, TJP2/ZO-2 and TJP3/ZO-3. Post-translationally, the disulfide bond is necessary for pore formation, but is not required for correct protein trafficking.

The protein localises to the cell junction. It localises to the tight junction. The protein resides in the cell membrane. The catalysed reaction is Na(+)(in) = Na(+)(out). The enzyme catalyses K(+)(in) = K(+)(out). It catalyses the reaction Rb(+)(in) = Rb(+)(out). It carries out the reaction Li(+)(in) = Li(+)(out). The catalysed reaction is Cs(+)(in) = Cs(+)(out). The enzyme catalyses Ca(2+)(in) = Ca(2+)(out). It catalyses the reaction methylamine(out) = methylamine(in). It carries out the reaction choline(out) = choline(in). The catalysed reaction is H2O(in) = H2O(out). Functionally, forms paracellular channels: polymerizes in tight junction strands with cation- and water-selective channels through the strands, conveying epithelial permeability in a process known as paracellular tight junction permeability. In intestinal epithelium, allows for sodium and water fluxes from the peritoneal side to the lumen of the intestine to regulate nutrient absorption and clear enteric pathogens as part of mucosal immune response. In kidney, allows passive sodium and calcium reabsorption across proximal tubules from the lumen back to the bloodstream. In the hepatobiliary tract, allows paracellular water and cation fluxes in the hepatic perivenous areas and biliary epithelium to generate bile flow and maintain osmotic gradients. The protein is Claudin-2 (CLDN2) of Canis lupus familiaris (Dog).